The chain runs to 546 residues: Oncoprotein-induced transcript 3 protein (546 aa).

A signal peptide spans 1 to 16; the sequence is MPLSLLLACLFTTVTL. 2 N-linked (GlcNAc...) asparagine glycosylation sites follow: Asn89 and Asn116. Positions 182 to 222 constitute an EGF-like; calcium-binding domain; the sequence is DENECEHNNGGCSEICVNLKNSHRCACGVGRVLRSDGKTCE. Intrachain disulfides connect Cys186–Cys197, Cys193–Cys206, and Cys208–Cys221. One can recognise a ZP domain in the interval 261–516; that stretch reads TCQVPVLCKS…SRCAQGCHRR (256 aa). An N-linked (GlcNAc...) asparagine glycan is attached at Asn299. The tract at residues 524 to 546 is disordered; that stretch reads DEDSAGLQSQTLTGGPISIDWEE.

Its subcellular location is the nucleus envelope. May be involved in hepatocellular function and development. The chain is Oncoprotein-induced transcript 3 protein (Oit3) from Rattus norvegicus (Rat).